An 849-amino-acid polypeptide reads, in one-letter code: Autoinducer 1 sensor kinase/phosphatase LuxN (849 aa).

7 helical membrane passes run 9–29 (IVYA…MWLF), 41–61 (VIFG…IAWI), 160–180 (SYFF…LVAM), 196–216 (IAGI…MTYF), 220–242 (FSLT…YALL), 251–275 (YIAY…AIFI), and 283–301 (WLIA…QLLY). The region spanning 468 to 683 (SIAHEMRNPL…EFHLYFPVVP (216 aa)) is the Histidine kinase domain. His471 is modified (phosphohistidine; by autocatalysis). Positions 722-835 (TVLIVDDKEV…ALRHVLGNWL (114 aa)) constitute a Response regulatory domain. Asp771 bears the 4-aspartylphosphate mark.

The protein localises to the cell inner membrane. The enzyme catalyses ATP + protein L-histidine = ADP + protein N-phospho-L-histidine.. The phosphatase activity is constitutive and the kinase activity is regulated by the presence or absence of AI-1. At low cell density the kinase activity overrides the phosphatase activity. In terms of biological role, at low cell density, in the absence of AI-1 (autoinducer 1), LuxN has a kinase activity and autophosphorylates on His-471. The phosphoryl group is then transferred on Asp-771 of the response regulator domain. The phosphoryl group is transferred to LuxU, and ultimately to LuxO. At high cell density, in the presence of AI-1, the kinase activity is inactivated, and the response regulator domain has a phosphatase activity. LuxN phosphatase acts on itself. As LuxU could function to establish an equilibrium between the aspartyl-phosphate of LuxN and the aspartyl-phosphate of LuxO, LuxU transfers phosphate from LuxO to LuxN and finally phosphate is drained from the system. This chain is Autoinducer 1 sensor kinase/phosphatase LuxN (luxN), found in Vibrio campbellii (strain ATCC BAA-1116).